A 192-amino-acid polypeptide reads, in one-letter code: Fe/S biogenesis protein NfuA (192 aa).

[4Fe-4S] cluster-binding residues include cysteine 149 and cysteine 152.

The protein belongs to the NfuA family. In terms of assembly, homodimer. The cofactor is [4Fe-4S] cluster.

Involved in iron-sulfur cluster biogenesis. Binds a 4Fe-4S cluster, can transfer this cluster to apoproteins, and thereby intervenes in the maturation of Fe/S proteins. Could also act as a scaffold/chaperone for damaged Fe/S proteins. The chain is Fe/S biogenesis protein NfuA from Shewanella oneidensis (strain ATCC 700550 / JCM 31522 / CIP 106686 / LMG 19005 / NCIMB 14063 / MR-1).